The primary structure comprises 380 residues: SAM and SH3 domain-containing protein 3 (380 aa).

Disordered regions lie at residues 1–76 (MLRR…GKKW) and 96–168 (LSEE…SPAP). A compositionally biased stretch (low complexity) spans 22 to 41 (LQRSSSFKDFAKSKPSSPVV). A phosphoserine mark is found at Ser27, Ser34, and Ser42. Thr61 carries the post-translational modification Phosphothreonine. Ser97 is modified (phosphoserine). Thr103 bears the Phosphothreonine mark. Ser110 is subject to Phosphoserine. Thr112 bears the Phosphothreonine mark. Ser113 and Ser120 each carry phosphoserine. The span at 141-150 (LSRQTSTGSE) shows a compositional bias: polar residues. In terms of domain architecture, SH3 spans 173 to 234 (PFCGRARVHT…KFIYVDVLPE (62 aa)). The 65-residue stretch at 252-316 (PKPKTLHELL…LTAAELLLDY (65 aa)) folds into the SAM domain. Thr318 is subject to Phosphothreonine. The segment covering 318–327 (TGSEEAEEGA) has biased composition (acidic residues). Residues 318–380 (TGSEEAEEGA…LQGLSLSGAP (63 aa)) form a disordered region. Residue Ser320 is modified to Phosphoserine. Polar residues predominate over residues 369–380 (EQLQGLSLSGAP).

Preferentially expressed in lymphoid tissues. Expressed in bone marrow, thymus, spleen, lymph nodes and Peyer patches of gut. In the spleen and lymph nodes, expressed in both T- and B-cells. In the thymus, in the medulla and cortex.

May function as a signaling adapter protein in lymphocytes. The polypeptide is SAM and SH3 domain-containing protein 3 (Sash3) (Mus musculus (Mouse)).